Consider the following 336-residue polypeptide: Phospho-N-acetylmuramoyl-pentapeptide-transferase (336 aa).

A run of 10 helical transmembrane segments spans residues 3–23 (LTLI…PYFI), 53–73 (GGTV…LFSI), 78–98 (SLAL…IGFL), 118–138 (LALQ…PSGI), 143–163 (VFGY…FWVV), 174–194 (GIDG…GVIA), 200–220 (FDVL…FCFN), 226–246 (VFMG…ISIA), 251–271 (WTLL…MLQV), and 316–336 (AFLW…LYVF).

Belongs to the glycosyltransferase 4 family. MraY subfamily. Requires Mg(2+) as cofactor.

It is found in the cell membrane. The catalysed reaction is UDP-N-acetyl-alpha-D-muramoyl-L-alanyl-gamma-D-glutamyl-L-lysyl-D-alanyl-D-alanine + di-trans,octa-cis-undecaprenyl phosphate = Mur2Ac(oyl-L-Ala-gamma-D-Glu-L-Lys-D-Ala-D-Ala)-di-trans,octa-cis-undecaprenyl diphosphate + UMP. It functions in the pathway cell wall biogenesis; peptidoglycan biosynthesis. Functionally, catalyzes the initial step of the lipid cycle reactions in the biosynthesis of the cell wall peptidoglycan: transfers peptidoglycan precursor phospho-MurNAc-pentapeptide from UDP-MurNAc-pentapeptide onto the lipid carrier undecaprenyl phosphate, yielding undecaprenyl-pyrophosphoryl-MurNAc-pentapeptide, known as lipid I. This chain is Phospho-N-acetylmuramoyl-pentapeptide-transferase, found in Streptococcus pyogenes serotype M4 (strain MGAS10750).